Reading from the N-terminus, the 369-residue chain is Protein-glutamate methylesterase/protein-glutamine glutaminase 1 (369 aa).

Positions 3-120 constitute a Response regulatory domain; it reads KVVVVDDSAF…SLDIVKIEKD (118 aa). 4-aspartylphosphate is present on Asp54. The segment covering 136–168 has biased composition (low complexity); sequence RSFRPAPAVRPAAPAALRATPRPSAAPSSAASS. The interval 136-174 is disordered; it reads RSFRPAPAVRPAAPAALRATPRPSAAPSSAASSTGTLQV. A CheB-type methylesterase domain is found at 177–369; sequence GKPVRDVVAI…AQAIMNAVYK (193 aa). Catalysis depends on residues Ser189, His216, and Asp312.

This sequence belongs to the CheB family. In terms of processing, phosphorylated by CheA. Phosphorylation of the N-terminal regulatory domain activates the methylesterase activity.

The protein localises to the cytoplasm. The enzyme catalyses [protein]-L-glutamate 5-O-methyl ester + H2O = L-glutamyl-[protein] + methanol + H(+). It carries out the reaction L-glutaminyl-[protein] + H2O = L-glutamyl-[protein] + NH4(+). Involved in chemotaxis. Part of a chemotaxis signal transduction system that modulates chemotaxis in response to various stimuli. Catalyzes the demethylation of specific methylglutamate residues introduced into the chemoreceptors (methyl-accepting chemotaxis proteins or MCP) by CheR. Also mediates the irreversible deamidation of specific glutamine residues to glutamic acid. The protein is Protein-glutamate methylesterase/protein-glutamine glutaminase 1 of Oleidesulfovibrio alaskensis (strain ATCC BAA-1058 / DSM 17464 / G20) (Desulfovibrio alaskensis).